A 213-amino-acid polypeptide reads, in one-letter code: Uridine kinase (213 aa).

15-22 (GASASGKS) provides a ligand contact to ATP.

It belongs to the uridine kinase family.

Its subcellular location is the cytoplasm. The enzyme catalyses uridine + ATP = UMP + ADP + H(+). It carries out the reaction cytidine + ATP = CMP + ADP + H(+). The protein operates within pyrimidine metabolism; CTP biosynthesis via salvage pathway; CTP from cytidine: step 1/3. Its pathway is pyrimidine metabolism; UMP biosynthesis via salvage pathway; UMP from uridine: step 1/1. The sequence is that of Uridine kinase from Erwinia tasmaniensis (strain DSM 17950 / CFBP 7177 / CIP 109463 / NCPPB 4357 / Et1/99).